A 555-amino-acid polypeptide reads, in one-letter code: MKDTVMAYLLENSIKFKGKPNPKAAMGKILGENPDLRSNVKELNEVISEVVKEIESMSLEEQQAKLDELAPEGLGQKTERKRKEIELKNVKGNVVMRFAPNPSGPLHIGHARASVLNDFFTKKYNGKLVLRLEDTDAKRVLPEAYEMIQEDLKWLGVKVDEVIVQSERLEIYYEYGRKLIEMGHAYVCDCDAEEFRNLREQGIPCKCRDTTPEENIALWEKMLAGELENVAVRLKTDIVHKNPSIRDFPIFRIERTPHPKNGTKYHVYPLMNLSVTVDDHLLGMTHVLRGKDHIVNTEKQEYIYNYFGWEIPEYVHYGILKIEGPVLSTSKMHAGILSGEYSGWDDARLGTLRALRKRGIRPEALYKLMVEIGIKQADVRFAWENLYAANKDIIDKDARRFFFVESPKKLVISGAESKKIDLRMHPDRNELGNRELLFDGEIYVSDDLEVGTMYRLMELFNIVIEKIENDVIYAKYDSDDLAVAKSNKASIIHWIPVKDSIPVTVIDENAEKIEGFAEKDFAVVNEDDFVQFERFGFVRVDEKEDNGYTCYLTHK.

The short motif at 100-110 (PNPSGPLHIGH) is the 'HIGH' region element.

Belongs to the class-I aminoacyl-tRNA synthetase family. Glutamate--tRNA ligase type 2 subfamily.

It is found in the cytoplasm. It catalyses the reaction tRNA(Glu) + L-glutamate + ATP = L-glutamyl-tRNA(Glu) + AMP + diphosphate. Catalyzes the attachment of glutamate to tRNA(Glu) in a two-step reaction: glutamate is first activated by ATP to form Glu-AMP and then transferred to the acceptor end of tRNA(Glu). The polypeptide is Glutamate--tRNA ligase (Methanococcus maripaludis (strain C7 / ATCC BAA-1331)).